A 385-amino-acid chain; its full sequence is 8-amino-7-oxononanoate synthase (385 aa).

Arginine 21 contributes to the substrate binding site. 108–109 (GF) provides a ligand contact to pyridoxal 5'-phosphate. A substrate-binding site is contributed by histidine 133. Residues serine 179, histidine 207, and threonine 233 each contribute to the pyridoxal 5'-phosphate site. N6-(pyridoxal phosphate)lysine is present on lysine 236. Residue threonine 352 participates in substrate binding.

It belongs to the class-II pyridoxal-phosphate-dependent aminotransferase family. BioF subfamily. Homodimer. Requires pyridoxal 5'-phosphate as cofactor.

It carries out the reaction 6-carboxyhexanoyl-[ACP] + L-alanine + H(+) = (8S)-8-amino-7-oxononanoate + holo-[ACP] + CO2. It participates in cofactor biosynthesis; biotin biosynthesis. Its function is as follows. Catalyzes the decarboxylative condensation of pimeloyl-[acyl-carrier protein] and L-alanine to produce 8-amino-7-oxononanoate (AON), [acyl-carrier protein], and carbon dioxide. This Salmonella dublin (strain CT_02021853) protein is 8-amino-7-oxononanoate synthase.